Consider the following 225-residue polypeptide: Pre-mRNA-splicing factor SPF27 (225 aa).

A2 is subject to N-acetylalanine. Position 94 is a phosphoserine (S94). Residues Y138–R222 are a coiled coil.

This sequence belongs to the SPF27 family. In terms of assembly, component of the pre-catalytic and catalytic spliceosome complexes. Component of the postcatalytic spliceosome P complex. Component of the PRP19-CDC5L splicing complex composed of a core complex comprising a homotetramer of PRPF19, CDC5L, PLRG1 and BCAS2, and at least three less stably associated proteins CTNNBL1, CWC15 and HSPA8. Interacts directly in the complex with PRPF19, CDC5L and PLRG1. As to expression, ubiquitously expressed.

It localises to the nucleus. The protein localises to the nucleolus. In terms of biological role, required for pre-mRNA splicing as component of the activated spliceosome. Component of the PRP19-CDC5L complex that forms an integral part of the spliceosome and is required for activating pre-mRNA splicing. May have a scaffolding role in the spliceosome assembly as it contacts all other components of the core complex. The PRP19-CDC5L complex may also play a role in the response to DNA damage (DDR). This chain is Pre-mRNA-splicing factor SPF27 (BCAS2), found in Homo sapiens (Human).